We begin with the raw amino-acid sequence, 378 residues long: Chaperone protein DnaJ 2 (378 aa).

In terms of domain architecture, J spans 4-68 (DYYAVLGVRR…QKKQVYDLGG (65 aa)). Residues 130-212 (GTTKDIQVDT…CAGDGRVRSR (83 aa)) form a CR-type zinc finger. Residues C143, C146, C160, C163, C186, C189, C200, and C203 each contribute to the Zn(2+) site. CXXCXGXG motif repeat units lie at residues 143 to 150 (CNTCNGEG), 160 to 167 (CDMCRGRG), 186 to 193 (CPQCQGFG), and 200 to 207 (CPECAGDG). Disordered stretches follow at residues 297-319 (RPGT…LRGG) and 351-378 (RGEE…FNGR). The span at 358 to 367 (GQFQPGQQGL) shows a compositional bias: polar residues.

The protein belongs to the DnaJ family. As to quaternary structure, homodimer. Zn(2+) serves as cofactor.

It localises to the cytoplasm. Functionally, participates actively in the response to hyperosmotic and heat shock by preventing the aggregation of stress-denatured proteins and by disaggregating proteins, also in an autonomous, DnaK-independent fashion. Unfolded proteins bind initially to DnaJ; upon interaction with the DnaJ-bound protein, DnaK hydrolyzes its bound ATP, resulting in the formation of a stable complex. GrpE releases ADP from DnaK; ATP binding to DnaK triggers the release of the substrate protein, thus completing the reaction cycle. Several rounds of ATP-dependent interactions between DnaJ, DnaK and GrpE are required for fully efficient folding. Also involved, together with DnaK and GrpE, in the DNA replication of plasmids through activation of initiation proteins. The chain is Chaperone protein DnaJ 2 from Streptomyces coelicolor (strain ATCC BAA-471 / A3(2) / M145).